Reading from the N-terminus, the 214-residue chain is A-type ATP synthase subunit D (214 aa).

This sequence belongs to the V-ATPase D subunit family. Has multiple subunits with at least A(3), B(3), C, D, E, F, H, I and proteolipid K(x).

It localises to the cell membrane. Component of the A-type ATP synthase that produces ATP from ADP in the presence of a proton gradient across the membrane. This Pyrococcus furiosus (strain ATCC 43587 / DSM 3638 / JCM 8422 / Vc1) protein is A-type ATP synthase subunit D.